A 94-amino-acid polypeptide reads, in one-letter code: MRTPDAQMRAGHIPAHLIPDGTDPRTVVVVHHQAEARDWTGPILLALVAAGGSVGVVMTLCLLLQTAATTATALAAAAPAGVGLSISLKARKGK.

The chain crosses the membrane as a helical span at residues 41 to 68 (GPILLALVAAGGSVGVVMTLCLLLQTAA).

The protein resides in the cell membrane. Its function is as follows. Involved in plasmid transfer. In Streptomyces lividans, this protein is Protein SpdA (spdA).